Reading from the N-terminus, the 298-residue chain is Cholesterol 25-hydroxylase (298 aa).

Asn-5 carries an N-linked (GlcNAc...) asparagine glycan. 3 helical membrane passes run 38 to 58 (IFPVTFSIITYVGFCLPFVVL), 88 to 108 (LGLTLYQHLVFVFPVTLLHWV), and 124 to 144 (LLSHVLICLLLFDTEIFAWHL). The 136-residue stretch at 128-263 (VLICLLLFDT…FTHWDKMLGT (136 aa)) folds into the Fatty acid hydroxylase domain. Positions 142–146 (WHLLH) match the Histidine box-1 motif. The Histidine box-2 motif lies at 157–161 (HKVHH). Asn-163 is a glycosylation site (N-linked (GlcNAc...) asparagine). Positions 238 to 244 (HHDMHHS) match the Histidine box-3 motif.

It belongs to the sterol desaturase family. The cofactor is Fe cation. Post-translationally, N-glycosylated. In terms of tissue distribution, widely expressed at low level and at higher level in the lung. Weakly expressed in the heart, lung and kidney.

Its subcellular location is the endoplasmic reticulum membrane. The catalysed reaction is cholesterol + AH2 + O2 = 25-hydroxycholesterol + A + H2O. The enzyme catalyses cholesterol + NADPH + O2 + H(+) = 25-hydroxycholesterol + NADP(+) + H2O. Functionally, catalyzes the formation of 25-hydroxycholesterol from cholesterol, leading to repress cholesterol biosynthetic enzymes. Plays a key role in cell positioning and movement in lymphoid tissues: 25-hydroxycholesterol is an intermediate in biosynthesis of 7-alpha,25-dihydroxycholesterol (7-alpha,25-OHC), an oxysterol that acts as a ligand for the G protein-coupled receptor GPR183/EBI2, a chemotactic receptor for a number of lymphoid cells. May play an important role in regulating lipid metabolism by synthesizing a corepressor that blocks sterol regulatory element binding protein (SREBP) processing. In testis, production of 25-hydroxycholesterol by macrophages may play a role in Leydig cell differentiation. Required to restrain inflammation in macrophages: production of 25-hydroxycholesterol protects macrophages from cholesterol overload, thereby preventing mitochondrial DNA release and subsequent activation of the AIM2 inflammasome. Interferon-stimulated gene which has broad antiviral activities against a wide range of enveloped viruses. This chain is Cholesterol 25-hydroxylase, found in Mus musculus (Mouse).